Here is a 488-residue protein sequence, read N- to C-terminus: Glutamyl-tRNA(Gln) amidotransferase subunit B, mitochondrial (488 aa).

The protein belongs to the GatB/GatE family. GatB subfamily. Subunit of the heterotrimeric GatFAB amidotransferase (AdT) complex, composed of A, B and F subunits.

It is found in the mitochondrion. The catalysed reaction is L-glutamyl-tRNA(Gln) + L-glutamine + ATP + H2O = L-glutaminyl-tRNA(Gln) + L-glutamate + ADP + phosphate + H(+). In terms of biological role, allows the formation of correctly charged Gln-tRNA(Gln) through the transamidation of misacylated Glu-tRNA(Gln) in the mitochondria. The reaction takes place in the presence of glutamine and ATP through an activated gamma-phospho-Glu-tRNA(Gln). This chain is Glutamyl-tRNA(Gln) amidotransferase subunit B, mitochondrial, found in Candida albicans (strain SC5314 / ATCC MYA-2876) (Yeast).